Consider the following 90-residue polypeptide: Small ribosomal subunit protein uS15 (90 aa).

This sequence belongs to the universal ribosomal protein uS15 family. As to quaternary structure, part of the 30S ribosomal subunit. Forms a bridge to the 50S subunit in the 70S ribosome, contacting the 23S rRNA.

Functionally, one of the primary rRNA binding proteins, it binds directly to 16S rRNA where it helps nucleate assembly of the platform of the 30S subunit by binding and bridging several RNA helices of the 16S rRNA. Its function is as follows. Forms an intersubunit bridge (bridge B4) with the 23S rRNA of the 50S subunit in the ribosome. In Helicobacter pylori (strain J99 / ATCC 700824) (Campylobacter pylori J99), this protein is Small ribosomal subunit protein uS15.